Consider the following 654-residue polypeptide: Tetratricopeptide repeat protein 30 homolog (654 aa).

7 TPR repeats span residues 10–43 (EGHV…ANTR), 44–76 (AGLS…APKE), 143–176 (ADTL…GGFN), 178–210 (LVAY…GVRN), 384–417 (LAAK…YLPV), 449–483 (AVWR…HSDD), and 533–566 (CIVN…GAGG).

Belongs to the TTC30/dfy-1/fleer family.

It localises to the cell projection. It is found in the cilium. Required for polyglutamylation of axonemal tubulin in sensory cilia. Plays a role in anterograde intraflagellar transport (IFT), the process by which cilia precursors are transported from the base of the cilium to the site of their incorporation at the tip. This chain is Tetratricopeptide repeat protein 30 homolog, found in Drosophila pseudoobscura pseudoobscura (Fruit fly).